A 1096-amino-acid polypeptide reads, in one-letter code: MAEGAASREAPAPLDVAGGEDDPRAGADAASGDAAPEASGGRMRDRRSGVALPGNAGVPADSEAGLLEAARATPRRTSIIKDPSNQKCGGRKKTVSFSSMPSEKKISSAHDCISFMQAGCELKKVRPNSRIYNRFFTLDTDLQALRWEPSKKDLEKAKLDISAIKEIRLGKNTETFRNNGLADQICEDCAFSILHGENYESLDLVANSADVANIWVSGLRYLVSRSKQPLDFMEGNQNTPRFMWLKTVFEAADVDGNGIMLEDTSVELIKQLNPTLKESKIRLKFKEIQKSKEKLTTRVTEEEFCEAFCELCTRPEVYFLLVQISKNKEYLDANDLMLFLEVEQGVTHVTEDMCLDIIRRYELSEDGRQKGFLAIDGFTQYLLSPECDIFDPEQKKVAQDMTQPLSHYYINASHNTYLIEDQFRGPADINGYVRALKMGCRSIELDVSDGPDNEPILCNRNNMAMLLSFRSVLEVINKFAFVASEYPLILCLGNHCSLPQQRVMVQQMKKVFGNKLYTEAPLSSESYLPSPEKLKHMIIVKGKKLPSESDLLEGEVTDEDEEAEMSRRVSGDYNGEQKHIWLCRELSDLVSICKSVQYRDFELSMKTQNYWEICSFSETLASRIANEYPEDFVNYNKKFLSRVYPSAMRIDSSNLNPQDFWNCGCQIVAMNFQTPGPMMDLHTGWFLQNGGCGYVLRPSIMRDEVSYFSANTKGIVPGVSPLLLHIKIISGQNFPKPKGACAKGDVIDPYVCVEIHGIPADCSEQRTKTVQQNSDNPIFDETFEFQVNLPELTMVRFVILDDDYIGDEFIGQYTIPFECLQPGYRHVPLRSFVGDIMEHVTLFVHIAITNRSGGGKAQKRSLSVRMGKKVREYTMLRNIGLKTIDDIFKIAVHPLREAIDMRENMQNAIVSVKELCGLPPIASLKQCLLTLSSRLITSDSTPSVSLVMKDCFPYLEPLGTIPDVQKRMLAAYDLMIQESRVLIEMADTVQEKIVQCQKAGMEFHEELHNLGAKEGLKGRKLNKAIESFAWNITVLKGQGDLLKNAKNEAVENIKQIQLACLSCGLSKGPGSAAEAKGKRSLEAIEEKESSEENGKL.

The interval 1–101 (MAEGAASREA…KKTVSFSSMP (101 aa)) is disordered. Residues 26 to 41 (GADAASGDAAPEASGG) are compositionally biased toward low complexity. Ser48 and Ser78 each carry phosphoserine. The segment at 83-222 (PSNQKCGGRK…NIWVSGLRYL (140 aa)) is interaction with PPP1C. Thr94 carries the phosphothreonine modification. Ser96 is modified (phosphoserine). Residues 114–224 (SFMQAGCELK…WVSGLRYLVS (111 aa)) enclose the PH domain. Residues 399–543 (QDMTQPLSHY…LKHMIIVKGK (145 aa)) enclose the PI-PLC X-box domain. Residues 544–568 (KLPSESDLLEGEVTDEDEEAEMSRR) form an interaction with GABA A beta subunit region. Thr557 bears the Phosphothreonine mark. Ser570 bears the Phosphoserine mark. The PI-PLC Y-box domain occupies 586–702 (LSDLVSICKS…GYVLRPSIMR (117 aa)). The C2 domain occupies 702-831 (RDEVSYFSAN…PGYRHVPLRS (130 aa)). Residues 1040-1060 (DLLKNAKNEAVENIKQIQLAC) are a coiled coil. Residues 1067 to 1096 (KGPGSAAEAKGKRSLEAIEEKESSEENGKL) are disordered. The segment covering 1075–1096 (AKGKRSLEAIEEKESSEENGKL) has biased composition (basic and acidic residues). Residue Ser1080 is modified to Phosphoserine.

Belongs to the PRIP family. Interacts with PPP2CA, GABA receptor beta subunits, GABA receptor gamma-2 subunits. Interacts with Ins(1,4,5)P3, Ins(1,4,5,6)P4, GABARAP, and PPP1C. May form a ternary complex with GABA receptor beta subunit and GABARAP. The formation of a ternary complex with GABA receptor beta subunit and GABARAP could be the key step for facilitating the association of GABARAP with the GABA receptor gamma-2 subunit and to allow it to be transported at the right destination. Phosphorylation of Thr-94 resulted in dissociation of PPP1C from PRIP1. In vitro, phosphorylated by the catalytic subunit of PKA. As to expression, expressed in brain. Found in the granular cell and Purkinje cell layers in the cerebellum; and in the hippocampal pyramidal cells, dentate granule cells and pyramidal granule cells of the cerebral cortex in the cerebrum.

It localises to the cytoplasm. Involved in an inositol phospholipid-based intracellular signaling cascade. Shows no PLC activity to phosphatidylinositol 4,5-bisphosphate and phosphatidylinositol. Component in the phospho-dependent endocytosis process of GABA A receptor. Acts as an inhibitor of PPP1C. In Rattus norvegicus (Rat), this protein is Inactive phospholipase C-like protein 1 (Plcl1).